A 950-amino-acid chain; its full sequence is General transcription factor II-I repeat domain-containing protein 2 (950 aa).

GTF2I-like repeat units lie at residues 100–194 and 324–418; these read QVDS…QPGG and LSSL…SNVG.

Belongs to the TFII-I family.

The protein localises to the nucleus. The protein is General transcription factor II-I repeat domain-containing protein 2 (GTF2IRD2) of Bos taurus (Bovine).